A 141-amino-acid chain; its full sequence is MATIKVDVVSAEEQIFSGEAKFVALPGETGELGILPGHTPLITRIRPGAVRIEVEGGSDEFVFVAGGILEVQPGAVTVLADTAIRGKDLDAAKAEEARKRAEETLQNAKSDLDLAKAQSELATAMAQLEAIQRLAKIRSRH.

Belongs to the ATPase epsilon chain family. As to quaternary structure, F-type ATPases have 2 components, CF(1) - the catalytic core - and CF(0) - the membrane proton channel. CF(1) has five subunits: alpha(3), beta(3), gamma(1), delta(1), epsilon(1). CF(0) has three main subunits: a, b and c.

The protein localises to the cell inner membrane. Produces ATP from ADP in the presence of a proton gradient across the membrane. This Burkholderia multivorans (strain ATCC 17616 / 249) protein is ATP synthase epsilon chain.